The following is a 227-amino-acid chain: Cytochrome c oxidase subunit 2 (227 aa).

The Mitochondrial intermembrane segment spans residues 1-14 (MAHAVQYGFQDAAA). A helical transmembrane segment spans residues 15 to 45 (PIMEELLYFHDHTLMIVFMISSLVLYIISLM). The Mitochondrial matrix portion of the chain corresponds to 46 to 59 (LSTELTHTSTMDAQ). The helical transmembrane segment at 60 to 87 (EVETVWTILPAVILILIALPSLRILYMM) threads the bilayer. Topologically, residues 88 to 227 (DEIETPSLTL…YFEEWLLKTL (140 aa)) are mitochondrial intermembrane. Residues histidine 161, cysteine 196, glutamate 198, cysteine 200, histidine 204, and methionine 207 each coordinate Cu cation. Glutamate 198 lines the Mg(2+) pocket. Tyrosine 218 is subject to Phosphotyrosine.

It belongs to the cytochrome c oxidase subunit 2 family. As to quaternary structure, component of the cytochrome c oxidase (complex IV, CIV), a multisubunit enzyme composed of 14 subunits. The complex is composed of a catalytic core of 3 subunits MT-CO1, MT-CO2 and MT-CO3, encoded in the mitochondrial DNA, and 11 supernumerary subunits COX4I, COX5A, COX5B, COX6A, COX6B, COX6C, COX7A, COX7B, COX7C, COX8 and NDUFA4, which are encoded in the nuclear genome. The complex exists as a monomer or a dimer and forms supercomplexes (SCs) in the inner mitochondrial membrane with NADH-ubiquinone oxidoreductase (complex I, CI) and ubiquinol-cytochrome c oxidoreductase (cytochrome b-c1 complex, complex III, CIII), resulting in different assemblies (supercomplex SCI(1)III(2)IV(1) and megacomplex MCI(2)III(2)IV(2)). Found in a complex with TMEM177, COA6, COX18, COX20, SCO1 and SCO2. Interacts with TMEM177 in a COX20-dependent manner. Interacts with COX20. Interacts with COX16. Requires Cu cation as cofactor.

The protein localises to the mitochondrion inner membrane. The catalysed reaction is 4 Fe(II)-[cytochrome c] + O2 + 8 H(+)(in) = 4 Fe(III)-[cytochrome c] + 2 H2O + 4 H(+)(out). Component of the cytochrome c oxidase, the last enzyme in the mitochondrial electron transport chain which drives oxidative phosphorylation. The respiratory chain contains 3 multisubunit complexes succinate dehydrogenase (complex II, CII), ubiquinol-cytochrome c oxidoreductase (cytochrome b-c1 complex, complex III, CIII) and cytochrome c oxidase (complex IV, CIV), that cooperate to transfer electrons derived from NADH and succinate to molecular oxygen, creating an electrochemical gradient over the inner membrane that drives transmembrane transport and the ATP synthase. Cytochrome c oxidase is the component of the respiratory chain that catalyzes the reduction of oxygen to water. Electrons originating from reduced cytochrome c in the intermembrane space (IMS) are transferred via the dinuclear copper A center (CU(A)) of subunit 2 and heme A of subunit 1 to the active site in subunit 1, a binuclear center (BNC) formed by heme A3 and copper B (CU(B)). The BNC reduces molecular oxygen to 2 water molecules using 4 electrons from cytochrome c in the IMS and 4 protons from the mitochondrial matrix. The protein is Cytochrome c oxidase subunit 2 (MT-CO2) of Galago senegalensis (Northern lesser bushbaby).